The following is a 274-amino-acid chain: ATP synthase subunit a (274 aa).

5 helical membrane passes run 44-64 (VDSMFFSLVLGSFFLSIFYMV), 110-130 (FIWVFLMNLMDLVPIDFFPFI), 142-164 (IVPSADINITLSMSLGVFFLILF), 212-232 (LFGNMYAGEMIFILIAGLLPW), and 243-263 (AIFHILIISLQAFIFMVLTIV).

It belongs to the ATPase A chain family. As to quaternary structure, F-type ATPases have 2 components, CF(1) - the catalytic core - and CF(0) - the membrane proton channel. CF(1) has five subunits: alpha(3), beta(3), gamma(1), delta(1), epsilon(1). CF(0) has three main subunits: a(1), b(2) and c(9-12). The alpha and beta chains form an alternating ring which encloses part of the gamma chain. CF(1) is attached to CF(0) by a central stalk formed by the gamma and epsilon chains, while a peripheral stalk is formed by the delta and b chains.

It is found in the cell membrane. Key component of the proton channel; it plays a direct role in the translocation of protons across the membrane. The polypeptide is ATP synthase subunit a (Buchnera aphidicola subsp. Acyrthosiphon pisum (strain APS) (Acyrthosiphon pisum symbiotic bacterium)).